The chain runs to 304 residues: Glycine--tRNA ligase alpha subunit (304 aa).

Belongs to the class-II aminoacyl-tRNA synthetase family. Tetramer of two alpha and two beta subunits.

It localises to the cytoplasm. The catalysed reaction is tRNA(Gly) + glycine + ATP = glycyl-tRNA(Gly) + AMP + diphosphate. In Afipia carboxidovorans (strain ATCC 49405 / DSM 1227 / KCTC 32145 / OM5) (Oligotropha carboxidovorans), this protein is Glycine--tRNA ligase alpha subunit.